The primary structure comprises 149 residues: Large ribosomal subunit protein bL17 (149 aa).

The protein belongs to the bacterial ribosomal protein bL17 family. As to quaternary structure, part of the 50S ribosomal subunit. Contacts protein L32.

This Kosmotoga olearia (strain ATCC BAA-1733 / DSM 21960 / TBF 19.5.1) protein is Large ribosomal subunit protein bL17.